The sequence spans 298 residues: Bifunctional protein FolD (298 aa).

Residues 166–168 (GRS), Ser195, and Ile236 contribute to the NADP(+) site.

The protein belongs to the tetrahydrofolate dehydrogenase/cyclohydrolase family. Homodimer.

The enzyme catalyses (6R)-5,10-methylene-5,6,7,8-tetrahydrofolate + NADP(+) = (6R)-5,10-methenyltetrahydrofolate + NADPH. It carries out the reaction (6R)-5,10-methenyltetrahydrofolate + H2O = (6R)-10-formyltetrahydrofolate + H(+). It participates in one-carbon metabolism; tetrahydrofolate interconversion. In terms of biological role, catalyzes the oxidation of 5,10-methylenetetrahydrofolate to 5,10-methenyltetrahydrofolate and then the hydrolysis of 5,10-methenyltetrahydrofolate to 10-formyltetrahydrofolate. The polypeptide is Bifunctional protein FolD (Chlorobium phaeobacteroides (strain BS1)).